Consider the following 229-residue polypeptide: NAD(P)H-hydrate epimerase (229 aa).

The region spanning 11 to 222 (YAAADIRAAE…DVGLDLSGAT (212 aa)) is the YjeF N-terminal domain. 59 to 63 (NNGGD) is a (6S)-NADPHX binding site. K(+) contacts are provided by N60 and D124. Residues 128–136 (GIGTTASPA) and D164 contribute to the (6S)-NADPHX site. Residue S167 coordinates K(+).

Belongs to the NnrE/AIBP family. Requires K(+) as cofactor.

The enzyme catalyses (6R)-NADHX = (6S)-NADHX. It carries out the reaction (6R)-NADPHX = (6S)-NADPHX. Functionally, catalyzes the epimerization of the S- and R-forms of NAD(P)HX, a damaged form of NAD(P)H that is a result of enzymatic or heat-dependent hydration. This is a prerequisite for the S-specific NAD(P)H-hydrate dehydratase to allow the repair of both epimers of NAD(P)HX. The protein is NAD(P)H-hydrate epimerase of Clavibacter sepedonicus (Clavibacter michiganensis subsp. sepedonicus).